The sequence spans 98 residues: Protein S100-A13 (98 aa).

The region spanning 18 to 53 (STFFTFAGREGRKGSLNINEFKELATQQLPHLLKDV) is the EF-hand domain. Positions 32, 37, 64, 66, 68, 70, and 75 each coordinate Ca(2+). Phosphoserine is present on Ser-32.

This sequence belongs to the S-100 family. In terms of assembly, homodimer. Part of a copper-dependent multiprotein complex containing S100A13, FGF1 and SYT1. Interacts with FGF1 and SYT1. Interacts with IL1A.

The protein localises to the cytoplasm. Its subcellular location is the secreted. In terms of biological role, plays a role in the export of proteins that lack a signal peptide and are secreted by an alternative pathway. Binds two calcium ions per subunit. Binds one copper ion. Binding of one copper ion does not interfere with calcium binding. Required for the copper-dependent stress-induced export of IL1A and FGF1. The calcium-free protein binds to lipid vesicles containing phosphatidylserine, but not to vesicles containing phosphatidylcholine. The polypeptide is Protein S100-A13 (S100a13) (Mus musculus (Mouse)).